Here is a 249-residue protein sequence, read N- to C-terminus: Short-chain dehydrogenase virB (249 aa).

6 residues coordinate NADP(+): I16, R104, Y150, K154, V183, and T185. Residue Y150 is the Proton donor of the active site. Residue K154 is the Lowers pKa of active site Tyr of the active site.

The protein belongs to the short-chain dehydrogenases/reductases (SDR) family.

The protein operates within secondary metabolite biosynthesis. Short-chain dehydrogenase; part of the gene cluster that mediates the biosynthesis of virensols and trichoxide, fungal natural products that contain or are derived from a salicylaldehyde core. The pathway begins with the synthesis of the reduced chain in virensol C by the highly reducing polyketide synthase virA via condensation of one acetate and 8 malonate units. VirA has interesting programming rules since the first 2 ketides are fully reduced, the 3 following ketides undergo beta-dehydration, and the last 3 ketides are only reduced to beta-hydroxys to yield the trihydroxy portion. The production of aldehyde virensol C by virA alone is surprising, since virA does not contain a reductase (R) domain that is typically associated with reductive product release in HRPKS. The cupin-domain enzyme virC is involved in enhancing virA product turnover. The short-chain dehydrogenase virB then oxidizes the C-7 alcohol of virensol C to a ketone, yielding virensol D. Virensol D is further transformed to salicylaldehyde 5-deoxyaurocitrin by the short-chain dehydrogenase virD. VirD catalyzes the dehydrogenation of C-3 to form the beta-ketone aldehyde, which is followed by the generation of the nucleophilic C-2 that is required for the intramolecular aldol condensation between C-2 and C-7, itself followed by dehydration and aromatization which leads to salicylaldehyde 5-deoxyaurocitrin. While the dehydrogenation of virensol D is definitely catalyzed by virD, the aldol condensation and dehydration may be uncatalyzed or assisted by virD. The short chain dehydrogenase virG then converts salicylaldehyde 5-deoxyaurocitrin into virensol B which is further hydroxylated by the cytochrome P450 monooxygenase virE to yield the hydroquinone virensol A. VirI then may oxidize virensol A to form the quinone, while virH performs the epoxidation. Finally, the two remaining short-chain dehydrogenases, virK and virL, are probably responsible for reducing the ketones to the corresponding alcohols to furnish the epoxycyclohexanol structure in trichoxide. The sequence is that of Short-chain dehydrogenase virB from Hypocrea virens (strain Gv29-8 / FGSC 10586) (Gliocladium virens).